A 464-amino-acid chain; its full sequence is Adenosylhomocysteinase (464 aa).

Positions 56, 131, and 190 each coordinate substrate. 191–193 (TTT) serves as a coordination point for NAD(+). Substrate-binding residues include Lys220 and Asp224. NAD(+) is bound by residues Asn225, 254 to 259 (GFGDVG), Glu277, Asn312, 333 to 335 (IGH), and Asn378.

This sequence belongs to the adenosylhomocysteinase family. NAD(+) is required as a cofactor.

It is found in the cytoplasm. It carries out the reaction S-adenosyl-L-homocysteine + H2O = L-homocysteine + adenosine. It participates in amino-acid biosynthesis; L-homocysteine biosynthesis; L-homocysteine from S-adenosyl-L-homocysteine: step 1/1. In terms of biological role, may play a key role in the regulation of the intracellular concentration of adenosylhomocysteine. This chain is Adenosylhomocysteinase, found in Zymomonas mobilis subsp. mobilis (strain ATCC 31821 / ZM4 / CP4).